We begin with the raw amino-acid sequence, 943 residues long: Isoleucine--tRNA ligase (943 aa).

The 'HIGH' region signature appears at 58-68 (PYANGSIHIGH). An L-isoleucyl-5'-AMP-binding site is contributed by Glu567. The 'KMSKS' region signature appears at 608-612 (KMSKS). Lys611 is a binding site for ATP. Cys906, Cys909, Cys926, and Cys929 together coordinate Zn(2+).

This sequence belongs to the class-I aminoacyl-tRNA synthetase family. IleS type 1 subfamily. Monomer. Zn(2+) serves as cofactor.

The protein localises to the cytoplasm. It catalyses the reaction tRNA(Ile) + L-isoleucine + ATP = L-isoleucyl-tRNA(Ile) + AMP + diphosphate. Functionally, catalyzes the attachment of isoleucine to tRNA(Ile). As IleRS can inadvertently accommodate and process structurally similar amino acids such as valine, to avoid such errors it has two additional distinct tRNA(Ile)-dependent editing activities. One activity is designated as 'pretransfer' editing and involves the hydrolysis of activated Val-AMP. The other activity is designated 'posttransfer' editing and involves deacylation of mischarged Val-tRNA(Ile). In Pseudomonas aeruginosa (strain UCBPP-PA14), this protein is Isoleucine--tRNA ligase.